Here is a 616-residue protein sequence, read N- to C-terminus: tRNA uridine 5-carboxymethylaminomethyl modification enzyme MnmG (616 aa).

Residues 10–15 (GAGHAG), V122, and S177 contribute to the FAD site. 271 to 285 (GPRYCPSIEDKVVRF) is an NAD(+) binding site. Q368 contributes to the FAD binding site.

It belongs to the MnmG family. In terms of assembly, homodimer. Heterotetramer of two MnmE and two MnmG subunits. The cofactor is FAD.

Its subcellular location is the cytoplasm. Functionally, NAD-binding protein involved in the addition of a carboxymethylaminomethyl (cmnm) group at the wobble position (U34) of certain tRNAs, forming tRNA-cmnm(5)s(2)U34. In Malacoplasma penetrans (strain HF-2) (Mycoplasma penetrans), this protein is tRNA uridine 5-carboxymethylaminomethyl modification enzyme MnmG.